A 357-amino-acid polypeptide reads, in one-letter code: 5-hydroxytryptamine receptor 5A (357 aa).

Topologically, residues 1 to 36 (MDLPINLTSFSLSTPSTLEPNRSLDTEALRTSQSFL) are extracellular. 2 N-linked (GlcNAc...) asparagine glycosylation sites follow: Asn-6 and Asn-21. The chain crosses the membrane as a helical span at residues 37-63 (SAFRVLVLTLLGFLAAATFTWNLLVLA). At 64-76 (TILRVRTFHRVPH) the chain is on the cytoplasmic side. Residues 77-103 (NLVASMAISDVLVAVLVMPLSLVHELS) form a helical membrane-spanning segment. The Extracellular portion of the chain corresponds to 104 to 114 (GRRWQLGRRLC). A disulfide bond links Cys-114 and Cys-192. Residues 115-137 (QLWIACDVLCCTASIWNVTAIAL) traverse the membrane as a helical segment. Asp-121 contributes to the serotonin binding site. Over 138–155 (DRYWSITRHLEYTLRARK) the chain is Cytoplasmic. A helical membrane pass occupies residues 156 to 176 (RVSNVMILLTWALSAVISLAP). Residues 177–198 (LLFGWGETYSELSEECQVSREP) are Extracellular-facing. A helical membrane pass occupies residues 199–220 (SYTVFSTVGAFYLPLCVVLFVY). The Cytoplasmic portion of the chain corresponds to 221-287 (WKIYKAAKFR…QKEQRAALMV (67 aa)). Residues 288 to 312 (GILIGVFVLCWFPFFVTELISPLCS) form a helical membrane-spanning segment. Residues 313-314 (WD) lie on the Extracellular side of the membrane. Residues 315–339 (IPALWKSIFLWLGYSNSFFNPLIYT) traverse the membrane as a helical segment. The Cytoplasmic portion of the chain corresponds to 340 to 357 (AFNRSYSSAFKVFFSKQQ).

The protein belongs to the G-protein coupled receptor 1 family. Central nervous system.

The protein localises to the cell membrane. Its function is as follows. G-protein coupled receptor for 5-hydroxytryptamine (serotonin), a biogenic hormone that functions as a neurotransmitter, a hormone and a mitogen. Also functions as a receptor for ergot alkaloid derivatives and other psychoactive substances. Ligand binding causes a conformation change that triggers signaling via guanine nucleotide-binding proteins (G proteins) and modulates the activity of downstream effectors. Htr5a is coupled to G(i)/G(o) G alpha proteins and mediates inhibitory neurotransmission: signaling inhibits adenylate cyclase activity and activates a phosphatidylinositol-calcium second messenger system that regulates the release of Ca(2+) ions from intracellular stores. The sequence is that of 5-hydroxytryptamine receptor 5A from Rattus norvegicus (Rat).